The following is a 326-amino-acid chain: 3-isopropylmalate dehydrogenase (326 aa).

4 residues coordinate substrate: R81, R91, R112, and D198. Residues D198, D222, and D226 each contribute to the Mg(2+) site. 255–267 (GAAFDIAGKGIAN) provides a ligand contact to NAD(+).

The protein belongs to the isocitrate and isopropylmalate dehydrogenases family. As to quaternary structure, homotetramer. It depends on Mg(2+) as a cofactor. The cofactor is Mn(2+).

It localises to the cytoplasm. It catalyses the reaction (2R,3S)-3-isopropylmalate + NAD(+) = 4-methyl-2-oxopentanoate + CO2 + NADH. The protein operates within amino-acid biosynthesis; L-leucine biosynthesis; L-leucine from 3-methyl-2-oxobutanoate: step 3/4. In terms of biological role, catalyzes the oxidation of 3-carboxy-2-hydroxy-4-methylpentanoate (3-isopropylmalate) to 3-carboxy-4-methyl-2-oxopentanoate. The product decarboxylates to 4-methyl-2 oxopentanoate. This Archaeoglobus fulgidus (strain ATCC 49558 / DSM 4304 / JCM 9628 / NBRC 100126 / VC-16) protein is 3-isopropylmalate dehydrogenase (leuB).